The chain runs to 508 residues: Photosystem II CP47 reaction center protein (508 aa).

6 helical membrane passes run 21-36 (AVHL…WAGS), 101-115 (ILLS…IWHW), 140-156 (GIHL…FGAF), 203-218 (IAAG…FHLS), 237-252 (VLSS…AFVV), and 457-472 (WFAL…HGAR).

Belongs to the PsbB/PsbC family. PsbB subfamily. PSII is composed of 1 copy each of membrane proteins PsbA, PsbB, PsbC, PsbD, PsbE, PsbF, PsbH, PsbI, PsbJ, PsbK, PsbL, PsbM, PsbT, PsbX, PsbY, PsbZ, Psb30/Ycf12, at least 3 peripheral proteins of the oxygen-evolving complex and a large number of cofactors. It forms dimeric complexes. Binds multiple chlorophylls. PSII binds additional chlorophylls, carotenoids and specific lipids. is required as a cofactor.

The protein localises to the plastid. It localises to the chloroplast thylakoid membrane. In terms of biological role, one of the components of the core complex of photosystem II (PSII). It binds chlorophyll and helps catalyze the primary light-induced photochemical processes of PSII. PSII is a light-driven water:plastoquinone oxidoreductase, using light energy to abstract electrons from H(2)O, generating O(2) and a proton gradient subsequently used for ATP formation. The protein is Photosystem II CP47 reaction center protein of Nephroselmis olivacea (Green alga).